The chain runs to 94 residues: uncharacterized protein (94 aa).

2 helical membrane passes run 7–24 (IFFIIVLVGFALFMSFNV) and 39–61 (AVPITLSLLFAFACGALTALLFL). The tract at residues 68-94 (TRKQKREDSPTSAPTGGVSSPEHVDVP) is disordered.

Its subcellular location is the cell membrane. This is an uncharacterized protein from Treponema pallidum (strain Nichols).